Consider the following 391-residue polypeptide: Probable sugar efflux transporter (391 aa).

12 consecutive transmembrane segments (helical) span residues 16–36, 51–71, 82–102, 110–130, 138–158, 170–190, 210–230, 247–267, 277–297, 300–320, 338–358, and 361–381; these read VFVF…PVAL, VGLM…PLML, LLFL…AWNF, MGIA…VIRV, QALG…LPLG, TFGV…KLLP, PLLV…FTTY, ITTL…FLFG, FIAF…VFKN, WVIF…TIAL, IFSG…SIVI, and LGLE…LFWL.

The protein belongs to the major facilitator superfamily. SotB (TC 2.A.1.2) family.

It localises to the cell inner membrane. Its function is as follows. Involved in the efflux of sugars. The physiological role may be the reduction of the intracellular concentration of toxic sugars or sugar metabolites. The sequence is that of Probable sugar efflux transporter from Helicobacter pylori (strain J99 / ATCC 700824) (Campylobacter pylori J99).